The primary structure comprises 274 residues: Type II restriction enzyme HgiEI (274 aa).

It belongs to the TdeIII type II restriction endonuclease family.

It carries out the reaction Endonucleolytic cleavage of DNA to give specific double-stranded fragments with terminal 5'-phosphates.. Its function is as follows. A P subtype restriction enzyme that recognizes the double-stranded sequence 5'-GGWCC-3' and cleaves after G-1. This system is more active than isoschizomeric RM.HgiBI. The polypeptide is Type II restriction enzyme HgiEI (Herpetosiphon aurantiacus (Herpetosiphon giganteus)).